A 581-amino-acid polypeptide reads, in one-letter code: Probable peptidoglycan D,D-transpeptidase PenA (581 aa).

The chain crosses the membrane as a helical span at residues 28 to 48 (ISFVLMAIAVLFAGLIARGLY). Serine 310 acts as the Acyl-ester intermediate in catalysis.

The protein belongs to the transpeptidase family. FtsI subfamily.

The protein resides in the cell inner membrane. It carries out the reaction Preferential cleavage: (Ac)2-L-Lys-D-Ala-|-D-Ala. Also transpeptidation of peptidyl-alanyl moieties that are N-acyl substituents of D-alanine.. Its pathway is cell wall biogenesis; peptidoglycan biosynthesis. Catalyzes cross-linking of the peptidoglycan cell wall at the division septum. This is Probable peptidoglycan D,D-transpeptidase PenA from Neisseria meningitidis serogroup A / serotype 4A (strain DSM 15465 / Z2491).